A 74-amino-acid polypeptide reads, in one-letter code: Putative ribosome-binding protein YbzG (74 aa).

In Bacillus subtilis (strain 168), this protein is Putative ribosome-binding protein YbzG (ybzG).